The chain runs to 479 residues: MNFETIIGLEVHVELNTNSKIFSPSSAHFGEDPNASTNVIDWSFPGVLPVMNKGVIDAGIKAALALNMSIHQHMHFDRKNYFYPDNPKAYQISQFDEPIGYNGWIDITLEDGSTKKIRIERAHLEEDAGKNTHGTDGYSYVDLNRQGVPLIEIVSEADMRSPEEAYAYLTALKEIIQYTGISDVKMEEGSMRVDANISLRPYGQEAFGTKTELKNLNSFSNVRKGLEFEVERQAKILRSGGVIRQETRRYDEASKGTILMRVKEGAADYRYFPEPDLPLFEIDDAWIEDMRAELPRFPAERRVSYIKDLGLSAYDAGQLTATKALSDFFEQAVALGGDAKQVSNWLQGEVAQFLNAEGKTIDQLALTPDSLVEMIAIIADGTISSKIAKKVFVHLAKHGGSARAYVEKAGLVQISDPAVLIPIIHQVFADNEAAVADFKSGKRNADKAFTGFLMKATKGQANPQIAQQLLAQELQKLLD.

It belongs to the GatB/GatE family. GatB subfamily. In terms of assembly, heterotrimer of A, B and C subunits.

The enzyme catalyses L-glutamyl-tRNA(Gln) + L-glutamine + ATP + H2O = L-glutaminyl-tRNA(Gln) + L-glutamate + ADP + phosphate + H(+). The catalysed reaction is L-aspartyl-tRNA(Asn) + L-glutamine + ATP + H2O = L-asparaginyl-tRNA(Asn) + L-glutamate + ADP + phosphate + 2 H(+). In terms of biological role, allows the formation of correctly charged Asn-tRNA(Asn) or Gln-tRNA(Gln) through the transamidation of misacylated Asp-tRNA(Asn) or Glu-tRNA(Gln) in organisms which lack either or both of asparaginyl-tRNA or glutaminyl-tRNA synthetases. The reaction takes place in the presence of glutamine and ATP through an activated phospho-Asp-tRNA(Asn) or phospho-Glu-tRNA(Gln). This Streptococcus equi subsp. zooepidemicus (strain MGCS10565) protein is Aspartyl/glutamyl-tRNA(Asn/Gln) amidotransferase subunit B.